Here is a 101-residue protein sequence, read N- to C-terminus: Small ribosomal subunit protein uS14 (101 aa).

This sequence belongs to the universal ribosomal protein uS14 family. In terms of assembly, part of the 30S ribosomal subunit. Contacts proteins S3 and S10.

Its function is as follows. Binds 16S rRNA, required for the assembly of 30S particles and may also be responsible for determining the conformation of the 16S rRNA at the A site. The protein is Small ribosomal subunit protein uS14 of Shewanella sediminis (strain HAW-EB3).